The following is a 172-amino-acid chain: Scytalone dehydratase-like protein Arp1 (172 aa).

Tyrosine 49 contacts substrate. Catalysis depends on residues histidine 84 and histidine 109. Residue asparagine 130 coordinates substrate.

It belongs to the scytalone dehydratase family. Homotrimer. Each subunit contains an active site, located in the central part of the hydrophobic core of the monomer, which functions independently.

In terms of biological role, scytalone dehydratase-like protein; part of the Pks2 gene cluster that mediates the formation of infectious structures (appressoria), enabling these fungi to kill insects faster. The product of the Pks2 gene cluster is different from the one of Pks1 and has still not been identified. This is Scytalone dehydratase-like protein Arp1 from Metarhizium guizhouense (strain ARSEF 977).